A 290-amino-acid chain; its full sequence is N-acetylmannosamine kinase (290 aa).

Residues 6 to 13 (ALDIGGTK) and 132 to 139 (GVGGGIIL) contribute to the ATP site. Residues His-156, Cys-166, Cys-168, and Cys-173 each contribute to the Zn(2+) site.

Belongs to the ROK (NagC/XylR) family. NanK subfamily. In terms of assembly, homodimer.

The catalysed reaction is an N-acyl-D-mannosamine + ATP = an N-acyl-D-mannosamine 6-phosphate + ADP + H(+). Its pathway is amino-sugar metabolism; N-acetylneuraminate degradation; D-fructose 6-phosphate from N-acetylneuraminate: step 2/5. Functionally, catalyzes the phosphorylation of N-acetylmannosamine (ManNAc) to ManNAc-6-P. The sequence is that of N-acetylmannosamine kinase from Yersinia pseudotuberculosis serotype O:1b (strain IP 31758).